The following is a 241-amino-acid chain: Carboxy-S-adenosyl-L-methionine synthase (241 aa).

S-adenosyl-L-methionine contacts are provided by residues Tyr38, 63-65 (GCS), 88-89 (DN), 116-117 (DI), Asn131, and Arg198.

The protein belongs to the class I-like SAM-binding methyltransferase superfamily. Cx-SAM synthase family. In terms of assembly, homodimer.

It carries out the reaction prephenate + S-adenosyl-L-methionine = carboxy-S-adenosyl-L-methionine + 3-phenylpyruvate + H2O. Catalyzes the conversion of S-adenosyl-L-methionine (SAM) to carboxy-S-adenosyl-L-methionine (Cx-SAM). In Histophilus somni (strain 2336) (Haemophilus somnus), this protein is Carboxy-S-adenosyl-L-methionine synthase.